Here is a 211-residue protein sequence, read N- to C-terminus: Imidazole glycerol phosphate synthase subunit HisH (211 aa).

One can recognise a Glutamine amidotransferase type-1 domain in the interval 1 to 206 (MIGIIDYGRG…GKWVNEDATV (206 aa)). Cys79 (nucleophile) is an active-site residue. Catalysis depends on residues His181 and Glu183.

In terms of assembly, heterodimer of HisH and HisF.

The protein resides in the cytoplasm. It catalyses the reaction 5-[(5-phospho-1-deoxy-D-ribulos-1-ylimino)methylamino]-1-(5-phospho-beta-D-ribosyl)imidazole-4-carboxamide + L-glutamine = D-erythro-1-(imidazol-4-yl)glycerol 3-phosphate + 5-amino-1-(5-phospho-beta-D-ribosyl)imidazole-4-carboxamide + L-glutamate + H(+). The catalysed reaction is L-glutamine + H2O = L-glutamate + NH4(+). Its pathway is amino-acid biosynthesis; L-histidine biosynthesis; L-histidine from 5-phospho-alpha-D-ribose 1-diphosphate: step 5/9. Its function is as follows. IGPS catalyzes the conversion of PRFAR and glutamine to IGP, AICAR and glutamate. The HisH subunit catalyzes the hydrolysis of glutamine to glutamate and ammonia as part of the synthesis of IGP and AICAR. The resulting ammonia molecule is channeled to the active site of HisF. This chain is Imidazole glycerol phosphate synthase subunit HisH, found in Desulfitobacterium hafniense (strain Y51).